The following is a 1003-amino-acid chain: Calcium-transporting ATPase sarcoplasmic/endoplasmic reticulum type (1003 aa).

At 1 to 59 (MEDAHAKKWEEVVDYFGVDPERGLALEQVKKNQEKYGPNELPAEEGKSLLTLILEQFDD) the chain is on the cytoplasmic side. Residues 60-78 (LLVKILLLAAIISLVLALF) traverse the membrane as a helical segment. Residues 79-89 (EEHDDEAEQLT) are Extracellular-facing. A helical membrane pass occupies residues 90 to 110 (AYVEPFVILLILIANAVVGVW). Residues 111 to 262 (QEKNAESAIE…QQKLDEFGEQ (152 aa)) are Cytoplasmic-facing. Residues 263 to 282 (LSKVISVICVAVWAINIGHF) form a helical membrane-spanning segment. At 283 to 300 (NDPAHGGSWIKGAIYYFK) the chain is on the extracellular side. A helical membrane pass occupies residues 301–318 (IAVALAVAAIPEGLPAVI). Over 319–775 (TTCLALGTRR…RYLISSNIGE (457 aa)) the chain is Cytoplasmic. Aspartate 354 serves as the catalytic 4-aspartylphosphate intermediate. Lysine 519 contacts ATP. A helical transmembrane segment spans residues 776–799 (VVSIFLTAALGLPEALIPVQLLWV). The Extracellular segment spans residues 800 to 840 (NLVTDGLPATALGFNPPDLDIMNKPPRRADEGLITGWLFFR). A helical membrane pass occupies residues 841–863 (YMAIGTYVGAATVGAAAHWFMMS). Over 864-898 (PTGPGLNFYQLSHHLQCTPENEYFEGIDCEIFSDP) the chain is Cytoplasmic. A helical membrane pass occupies residues 899–917 (HPMTMALSVLVTIEMLNAI). Residues 918 to 934 (NSLSENQSLLVMPPWSN) lie on the Extracellular side of the membrane. Residues 935–954 (IWLISAICLSMTLHFVILYV) form a helical membrane-spanning segment. Residues 955 to 1003 (EILSTVFQICPLTLTEWIVVLKISFPVLLLDEVLKFVARKYTDEFSFIK) lie on the Cytoplasmic side of the membrane.

The protein belongs to the cation transport ATPase (P-type) (TC 3.A.3) family.

It is found in the sarcoplasmic reticulum membrane. It catalyses the reaction Ca(2+)(in) + ATP + H2O = Ca(2+)(out) + ADP + phosphate + H(+). This magnesium-dependent enzyme catalyzes the hydrolysis of ATP coupled with the transport of the calcium. The chain is Calcium-transporting ATPase sarcoplasmic/endoplasmic reticulum type from Artemia franciscana (Brine shrimp).